A 203-amino-acid polypeptide reads, in one-letter code: Glycerol-3-phosphate acyltransferase (203 aa).

The next 6 helical transmembrane spans lie at 3 to 23 (ILLATVAAYLIGSVSFAVVVS), 51 to 71 (KAAILTLVGDAFKGWLAVWLV), 74 to 94 (FGIGGEIGVALAAIAVFLGHL), 116 to 136 (AVHPVLGLATALTWLIVAFFF), 140 to 160 (SLAALVAAVFAPIFDVFLFGT), and 164 to 178 (PVAWAVLAMSVLLIW).

This sequence belongs to the PlsY family. In terms of assembly, probably interacts with PlsX.

It localises to the cell inner membrane. The catalysed reaction is an acyl phosphate + sn-glycerol 3-phosphate = a 1-acyl-sn-glycero-3-phosphate + phosphate. The protein operates within lipid metabolism; phospholipid metabolism. Its function is as follows. Catalyzes the transfer of an acyl group from acyl-phosphate (acyl-PO(4)) to glycerol-3-phosphate (G3P) to form lysophosphatidic acid (LPA). This enzyme utilizes acyl-phosphate as fatty acyl donor, but not acyl-CoA or acyl-ACP. In Burkholderia mallei (strain ATCC 23344), this protein is Glycerol-3-phosphate acyltransferase.